The chain runs to 462 residues: Steroidogenic factor 1 (462 aa).

Residues 10–85 (DELCPVCGDK…VGMRLEAVRA (76 aa)) constitute a DNA-binding region (nuclear receptor). The NR C4-type zinc-finger motif lies at 13-33 (CPVCGDKVSGYHYGLLTCESC). N6-acetyllysine is present on residues Lys-34, Lys-38, and Lys-72. Residues 49–73 (CTESQSCKIDKTQRKRCPFCRFQKC) form an NR C4-type zinc finger. The interval 117–149 (GFKLETGPPMGVPPPPPPPPDYMLPPSLHAPEP) is disordered. Lys-119 participates in a covalent cross-link: Glycyl lysine isopeptide (Lys-Gly) (interchain with G-Cter in SUMO). Positions 126 to 139 (MGVPPPPPPPPDYM) are enriched in pro residues. Residue Lys-194 forms a Glycyl lysine isopeptide (Lys-Gly) (interchain with G-Cter in SUMO) linkage. Ser-203 is modified (phosphoserine; by CDK7). Residues 223–460 (NVPELILQLL…NLLIEMLQAK (238 aa)) form the NR LBD domain. Positions 342, 437, and 441 each coordinate a 1,2-diacyl-sn-glycero-3-phosphocholine.

It belongs to the nuclear hormone receptor family. NR5 subfamily. Binds DNA as a monomer. Part of a complex consisting of SFPQ, NONO and NR5A1. Interacts with NR0B2, NCOA2 and PPARGC1A. Interacts with DGKQ and CDK7. Binds to and activated by HIPK3. In terms of processing, acetylation stimulates the transcriptional activity. Post-translationally, sumoylation reduces CDK7-mediated phosphorylation on Ser-203. Phosphorylated on Ser-203 by CDK7. This phosphorylation promotes transcriptional activity.

It is found in the nucleus. Functionally, transcriptional activator. Seems to be essential for sexual differentiation and formation of the primary steroidogenic tissues. Binds to the Ad4 site found in the promoter region of steroidogenic P450 genes such as CYP11A, CYP11B and CYP21B. Also regulates the AMH/Muellerian inhibiting substance gene as well as the AHCH and STAR genes. 5'-YCAAGGYC-3' and 5'-RRAGGTCA-3' are the consensus sequences for the recognition by NR5A1. The SFPQ-NONO-NR5A1 complex binds to the CYP17 promoter and regulates basal and cAMP-dependent transcriptional activity. Binds phosphatidylcholine and phospholipids with a phosphatidylinositol (PI) headgroup, in particular PI(3,4)P2 and PI(3,4,5)P3. Activated by the phosphorylation of NR5A1 by HIPK3 leading to increased steroidogenic gene expression upon cAMP signaling pathway stimulation. The protein is Steroidogenic factor 1 (Nr5a1) of Rattus norvegicus (Rat).